A 688-amino-acid polypeptide reads, in one-letter code: Potassium-transporting ATPase ATP-binding subunit (688 aa).

4 helical membrane passes run 35–55 (VMMV…VQFA), 62–82 (AVFS…ANLA), 219–239 (IALS…VVTL), and 260–280 (VLVA…LSAI). The active-site 4-aspartylphosphate intermediate is aspartate 313. Residues aspartate 350, glutamate 354, 383–390 (FSAQTRMS), and lysine 401 each bind ATP. Mg(2+)-binding residues include aspartate 524 and aspartate 528. 3 consecutive transmembrane segments (helical) span residues 594 to 614 (FAIL…LNLM), 622 to 642 (AILS…PLAL), and 668 to 688 (VVLP…MGWI).

Belongs to the cation transport ATPase (P-type) (TC 3.A.3) family. Type IA subfamily. The system is composed of three essential subunits: KdpA, KdpB and KdpC.

The protein localises to the cell inner membrane. The enzyme catalyses K(+)(out) + ATP + H2O = K(+)(in) + ADP + phosphate + H(+). Its function is as follows. Part of the high-affinity ATP-driven potassium transport (or Kdp) system, which catalyzes the hydrolysis of ATP coupled with the electrogenic transport of potassium into the cytoplasm. This subunit is responsible for energy coupling to the transport system and for the release of the potassium ions to the cytoplasm. In Tolumonas auensis (strain DSM 9187 / NBRC 110442 / TA 4), this protein is Potassium-transporting ATPase ATP-binding subunit.